The following is a 264-amino-acid chain: Probable metallo-hydrolase YflN (264 aa).

Positions 80, 82, 84, 85, 169, 188, and 241 each coordinate Zn(2+).

The protein belongs to the metallo-beta-lactamase superfamily. Zn(2+) serves as cofactor.

This Bacillus subtilis (strain 168) protein is Probable metallo-hydrolase YflN (yflN).